A 266-amino-acid polypeptide reads, in one-letter code: Undecaprenyl-diphosphatase (266 aa).

Transmembrane regions (helical) follow at residues 1–21 (MDTF…FLPI), 39–59 (QGLS…VIYF), 87–107 (WWII…KDFI), 111–131 (LRSA…LWWA), 149–169 (ALLI…RSGA), 183–203 (AAAR…AILV), 218–238 (ALTL…HYFL), and 246–266 (MTPF…FIFL).

The protein belongs to the UppP family.

It is found in the cell inner membrane. The catalysed reaction is di-trans,octa-cis-undecaprenyl diphosphate + H2O = di-trans,octa-cis-undecaprenyl phosphate + phosphate + H(+). Its function is as follows. Catalyzes the dephosphorylation of undecaprenyl diphosphate (UPP). Confers resistance to bacitracin. The sequence is that of Undecaprenyl-diphosphatase from Shewanella putrefaciens (strain CN-32 / ATCC BAA-453).